Reading from the N-terminus, the 314-residue chain is tRNA-cytidine(32) 2-sulfurtransferase (314 aa).

The PP-loop motif signature appears at 39–44 (SGGKDS). Positions 114, 117, and 205 each coordinate [4Fe-4S] cluster.

The protein belongs to the TtcA family. In terms of assembly, homodimer. It depends on Mg(2+) as a cofactor. The cofactor is [4Fe-4S] cluster.

It is found in the cytoplasm. The catalysed reaction is cytidine(32) in tRNA + S-sulfanyl-L-cysteinyl-[cysteine desulfurase] + AH2 + ATP = 2-thiocytidine(32) in tRNA + L-cysteinyl-[cysteine desulfurase] + A + AMP + diphosphate + H(+). It functions in the pathway tRNA modification. Functionally, catalyzes the ATP-dependent 2-thiolation of cytidine in position 32 of tRNA, to form 2-thiocytidine (s(2)C32). The sulfur atoms are provided by the cysteine/cysteine desulfurase (IscS) system. The sequence is that of tRNA-cytidine(32) 2-sulfurtransferase from Cupriavidus metallidurans (strain ATCC 43123 / DSM 2839 / NBRC 102507 / CH34) (Ralstonia metallidurans).